The sequence spans 250 residues: Small ribosomal subunit protein uS3 (250 aa).

The region spanning 39–107 (VREFLTKKLK…PAQVSINEID (69 aa)) is the KH type-2 domain. Positions 215-250 (MNPAPAEERPAKRGRGRGEGQERRGRRGDRAADKGE) are disordered. Over residues 220–250 (AEERPAKRGRGRGEGQERRGRRGDRAADKGE) the composition is skewed to basic and acidic residues.

This sequence belongs to the universal ribosomal protein uS3 family. Part of the 30S ribosomal subunit. Forms a tight complex with proteins S10 and S14.

In terms of biological role, binds the lower part of the 30S subunit head. Binds mRNA in the 70S ribosome, positioning it for translation. The polypeptide is Small ribosomal subunit protein uS3 (Acinetobacter baumannii (strain AB307-0294)).